A 983-amino-acid chain; its full sequence is Chaperone protein ClpB3, mitochondrial (983 aa).

A mitochondrion-targeting transit peptide spans 1-87; sequence MSRATAVSRL…LFHPTQAARY (87 aa). Positions 97-240 constitute a Clp R domain; that stretch reads PGEFTEMAWE…KEAISAVRGS (144 aa). Repeat stretches follow at residues 100–165 and 177–240; these read FTEM…ISRQ and IGSS…VRGS. Residues 255 to 503 form an i region; that stretch reads LEKYGIDMTE…KLKMEITSKP (249 aa). ATP is bound at residue 300 to 307; the sequence is GEPGVGKT. A coiled-coil region spans residues 504–627; it reads IELDEVDREI…QQSGKSMLRE (124 aa). An II region spans residues 629-820; the sequence is VTDVDIAEIV…VIIMTSNIGS (192 aa). 703-710 contributes to the ATP binding site; sequence GPTGVGKT.

Belongs to the ClpA/ClpB family.

Its subcellular location is the mitochondrion. Its function is as follows. Molecular chaperone that may not be involved in heat stress response or tolerance. The sequence is that of Chaperone protein ClpB3, mitochondrial (CLPB3) from Oryza sativa subsp. japonica (Rice).